The chain runs to 504 residues: Subtilisin-like protease 1 (504 aa).

The signal sequence occupies residues 1-19 (MGVFRFISISLAAVSAANA). The propeptide occupies 20–116 (AQILSMPHAQ…VEPDTIVSVH (97 aa)). The Inhibitor I9 domain maps to 34-116 (SYIVMMKDDT…VEPDTIVSVH (83 aa)). In terms of domain architecture, Peptidase S8 spans 126 to 400 (SWGLARISNP…NVLINNGGAK (275 aa)). Active-site charge relay system residues include D158 and H190. Positions 172–198 (AIWGSNQVNDGDDRDGSGHGTHTSGTM) are disordered. N233 and N251 each carry an N-linked (GlcNAc...) asparagine glycan. Residues 282–294 (NDNQDAQSSSPAS) are compositionally biased toward polar residues. The tract at residues 282-312 (NDNQDAQSSSPASEPSVCTVGSSAEDDSRSS) is disordered. The active-site Charge relay system is S345. Residues 378–394 (TSSITDAGPGTPTNVLI) are compositionally biased toward polar residues. The disordered stretch occupies residues 378 to 483 (TSSITDAGPG…YPGGDNFDFD (106 aa)). Pro residues-rich tracts occupy residues 405 to 449 (NPNP…PGQP) and 457 to 473 (APAP…PHTP).

The protein belongs to the peptidase S8 family.

The protein resides in the secreted. Its function is as follows. Secreted subtilisin-like serine protease with keratinolytic activity that contributes to pathogenicity. The protein is Subtilisin-like protease 1 (SUB1) of Trichophyton rubrum (Athlete's foot fungus).